The sequence spans 1241 residues: Phosphorylase b kinase regulatory subunit alpha, skeletal muscle isoform (1241 aa).

9 positions are modified to phosphoserine: serine 629, serine 730, serine 736, serine 739, serine 759, serine 812, serine 973, serine 982, and serine 986. The tract at residues 811–841 is calmodulin-binding; the sequence is LSELYVKVGEIRHWGLIRYISGILRKKVEAL. Residue serine 1008 is modified to Phosphoserine; by autocatalysis. Serine 1019 carries the post-translational modification Phosphoserine; by PKA. Residues serine 1021 and serine 1024 each carry the phosphoserine modification. A calmodulin-binding region spans residues 1064–1104; the sequence is SKDSRQGQWQRRRRLDGALNRVPIGFYQKVWKILQKCHGLS. Residue serine 1131 is modified to Phosphoserine. Cysteine 1238 carries S-farnesyl cysteine lipidation.

The protein belongs to the phosphorylase b kinase regulatory chain family. Hexadecamer of 4 heterotetramers, each composed of alpha, beta, gamma, and delta subunits. Alpha (PHKA1 or PHKA2) and beta (PHKB) are regulatory subunits, gamma (PHKG1 or PHKG2) is the catalytic subunit, and delta is calmodulin. Although the final Cys may be farnesylated, the terminal tripeptide is probably not removed, and the C-terminus is not methylated. As to expression, both isoforms are expressed in muscle.

Its subcellular location is the cell membrane. It functions in the pathway glycan biosynthesis; glycogen metabolism. By phosphorylation of various serine residues and by calcium. Phosphorylase b kinase catalyzes the phosphorylation of serine in certain substrates, including troponin I. The alpha chain may bind calmodulin. This chain is Phosphorylase b kinase regulatory subunit alpha, skeletal muscle isoform (Phka1), found in Mus musculus (Mouse).